The chain runs to 144 residues: Methylglyoxal synthase (144 aa).

Residues 1 to 144 (MNIALIAHDE…EEEQRKFLTD (144 aa)) enclose the MGS-like domain. Residues H8, K12, 34–37 (TGTT), and 54–55 (SG) contribute to the substrate site. Catalysis depends on D60, which acts as the Proton donor/acceptor. Residue H87 participates in substrate binding.

This sequence belongs to the methylglyoxal synthase family.

The catalysed reaction is dihydroxyacetone phosphate = methylglyoxal + phosphate. Functionally, catalyzes the formation of methylglyoxal from dihydroxyacetone phosphate. This chain is Methylglyoxal synthase, found in Exiguobacterium sibiricum (strain DSM 17290 / CCUG 55495 / CIP 109462 / JCM 13490 / 255-15).